The following is a 219-amino-acid chain: Cell division protein B2 (219 aa).

Its function is as follows. Part of a cell division machinery. This chain is Cell division protein B2, found in Sulfolobus acidocaldarius (strain ATCC 33909 / DSM 639 / JCM 8929 / NBRC 15157 / NCIMB 11770).